A 733-amino-acid chain; its full sequence is Cell division cycle protein 48 homolog AF_1297 (733 aa).

ATP is bound by residues 223–230 and 496–503; these read GPPGTGKT.

It belongs to the AAA ATPase family. CDC48 subfamily.

This chain is Cell division cycle protein 48 homolog AF_1297, found in Archaeoglobus fulgidus (strain ATCC 49558 / DSM 4304 / JCM 9628 / NBRC 100126 / VC-16).